A 279-amino-acid polypeptide reads, in one-letter code: Acetyl-coenzyme A carboxylase carboxyl transferase subunit beta (279 aa).

Positions 23 to 279 constitute a CoA carboxyltransferase N-terminal domain; it reads LWWKCEECGA…LTTLLSLMKL (257 aa). Residues Cys-27, Cys-30, Cys-46, and Cys-49 each coordinate Zn(2+). A C4-type zinc finger spans residues 27–49; the sequence is CEECGAALHKKQMEASDHTCPQC.

This sequence belongs to the AccD/PCCB family. Acetyl-CoA carboxylase is a heterohexamer composed of biotin carboxyl carrier protein (AccB), biotin carboxylase (AccC) and two subunits each of ACCase subunit alpha (AccA) and ACCase subunit beta (AccD). It depends on Zn(2+) as a cofactor.

Its subcellular location is the cytoplasm. The catalysed reaction is N(6)-carboxybiotinyl-L-lysyl-[protein] + acetyl-CoA = N(6)-biotinyl-L-lysyl-[protein] + malonyl-CoA. Its pathway is lipid metabolism; malonyl-CoA biosynthesis; malonyl-CoA from acetyl-CoA: step 1/1. Its function is as follows. Component of the acetyl coenzyme A carboxylase (ACC) complex. Biotin carboxylase (BC) catalyzes the carboxylation of biotin on its carrier protein (BCCP) and then the CO(2) group is transferred by the transcarboxylase to acetyl-CoA to form malonyl-CoA. This is Acetyl-coenzyme A carboxylase carboxyl transferase subunit beta from Chlorobium chlorochromatii (strain CaD3).